A 129-amino-acid chain; its full sequence is UPF0212 protein MA_1372 (129 aa).

This sequence belongs to the UPF0212 family.

This Methanosarcina acetivorans (strain ATCC 35395 / DSM 2834 / JCM 12185 / C2A) protein is UPF0212 protein MA_1372.